The chain runs to 305 residues: Serine/threonine-protein phosphatase PP2A catalytic subunit (305 aa).

Residues aspartate 53, histidine 55, aspartate 81, and asparagine 113 each coordinate Mn(2+). Residue histidine 114 is the Proton donor of the active site. Mn(2+)-binding residues include histidine 163 and histidine 237.

This sequence belongs to the PPP phosphatase family. PP-2A subfamily. Requires Mn(2+) as cofactor.

The catalysed reaction is O-phospho-L-seryl-[protein] + H2O = L-seryl-[protein] + phosphate. It catalyses the reaction O-phospho-L-threonyl-[protein] + H2O = L-threonyl-[protein] + phosphate. The sequence is that of Serine/threonine-protein phosphatase PP2A catalytic subunit from Helianthus annuus (Common sunflower).